We begin with the raw amino-acid sequence, 180 residues long: Crossover junction endodeoxyribonuclease RuvC (180 aa).

Catalysis depends on residues aspartate 7, glutamate 66, and aspartate 138. Mg(2+) is bound by residues aspartate 7, glutamate 66, and aspartate 138.

It belongs to the RuvC family. As to quaternary structure, homodimer which binds Holliday junction (HJ) DNA. The HJ becomes 2-fold symmetrical on binding to RuvC with unstacked arms; it has a different conformation from HJ DNA in complex with RuvA. In the full resolvosome a probable DNA-RuvA(4)-RuvB(12)-RuvC(2) complex forms which resolves the HJ. Mg(2+) serves as cofactor.

The protein localises to the cytoplasm. It carries out the reaction Endonucleolytic cleavage at a junction such as a reciprocal single-stranded crossover between two homologous DNA duplexes (Holliday junction).. Its function is as follows. The RuvA-RuvB-RuvC complex processes Holliday junction (HJ) DNA during genetic recombination and DNA repair. Endonuclease that resolves HJ intermediates. Cleaves cruciform DNA by making single-stranded nicks across the HJ at symmetrical positions within the homologous arms, yielding a 5'-phosphate and a 3'-hydroxyl group; requires a central core of homology in the junction. The consensus cleavage sequence is 5'-(A/T)TT(C/G)-3'. Cleavage occurs on the 3'-side of the TT dinucleotide at the point of strand exchange. HJ branch migration catalyzed by RuvA-RuvB allows RuvC to scan DNA until it finds its consensus sequence, where it cleaves and resolves the cruciform DNA. This is Crossover junction endodeoxyribonuclease RuvC from Burkholderia orbicola (strain MC0-3).